The primary structure comprises 504 residues: ATP synthase subunit alpha, chloroplastic (504 aa).

169-176 (GDRQTGKT) contacts ATP.

The protein belongs to the ATPase alpha/beta chains family. In terms of assembly, F-type ATPases have 2 components, CF(1) - the catalytic core - and CF(0) - the membrane proton channel. CF(1) has five subunits: alpha(3), beta(3), gamma(1), delta(1), epsilon(1). CF(0) has four main subunits: a, b, b' and c.

The protein localises to the plastid. Its subcellular location is the chloroplast thylakoid membrane. The catalysed reaction is ATP + H2O + 4 H(+)(in) = ADP + phosphate + 5 H(+)(out). In terms of biological role, produces ATP from ADP in the presence of a proton gradient across the membrane. The alpha chain is a regulatory subunit. The sequence is that of ATP synthase subunit alpha, chloroplastic from Stigeoclonium helveticum (Green alga).